The primary structure comprises 95 residues: Aspartyl/glutamyl-tRNA(Asn/Gln) amidotransferase subunit C (95 aa).

It belongs to the GatC family. As to quaternary structure, heterotrimer of A, B and C subunits.

It catalyses the reaction L-glutamyl-tRNA(Gln) + L-glutamine + ATP + H2O = L-glutaminyl-tRNA(Gln) + L-glutamate + ADP + phosphate + H(+). It carries out the reaction L-aspartyl-tRNA(Asn) + L-glutamine + ATP + H2O = L-asparaginyl-tRNA(Asn) + L-glutamate + ADP + phosphate + 2 H(+). Allows the formation of correctly charged Asn-tRNA(Asn) or Gln-tRNA(Gln) through the transamidation of misacylated Asp-tRNA(Asn) or Glu-tRNA(Gln) in organisms which lack either or both of asparaginyl-tRNA or glutaminyl-tRNA synthetases. The reaction takes place in the presence of glutamine and ATP through an activated phospho-Asp-tRNA(Asn) or phospho-Glu-tRNA(Gln). In Methylobacterium nodulans (strain LMG 21967 / CNCM I-2342 / ORS 2060), this protein is Aspartyl/glutamyl-tRNA(Asn/Gln) amidotransferase subunit C.